The following is a 490-amino-acid chain: Probable glycine dehydrogenase (decarboxylating) subunit 2 (490 aa).

Lysine 273 carries the post-translational modification N6-(pyridoxal phosphate)lysine.

This sequence belongs to the GcvP family. C-terminal subunit subfamily. In terms of assembly, the glycine cleavage system is composed of four proteins: P, T, L and H. In this organism, the P 'protein' is a heterodimer of two subunits. The cofactor is pyridoxal 5'-phosphate.

The enzyme catalyses N(6)-[(R)-lipoyl]-L-lysyl-[glycine-cleavage complex H protein] + glycine + H(+) = N(6)-[(R)-S(8)-aminomethyldihydrolipoyl]-L-lysyl-[glycine-cleavage complex H protein] + CO2. Functionally, the glycine cleavage system catalyzes the degradation of glycine. The P protein binds the alpha-amino group of glycine through its pyridoxal phosphate cofactor; CO(2) is released and the remaining methylamine moiety is then transferred to the lipoamide cofactor of the H protein. The chain is Probable glycine dehydrogenase (decarboxylating) subunit 2 from Staphylococcus aureus (strain bovine RF122 / ET3-1).